A 218-amino-acid chain; its full sequence is Guanylate kinase (218 aa).

One can recognise a Guanylate kinase-like domain in the interval 5–188 (GNLFILSAPS…ALLDLTTIVN (184 aa)). 12-19 (APSGAGKS) lines the ATP pocket.

This sequence belongs to the guanylate kinase family.

Its subcellular location is the cytoplasm. It catalyses the reaction GMP + ATP = GDP + ADP. Its function is as follows. Essential for recycling GMP and indirectly, cGMP. The polypeptide is Guanylate kinase (Colwellia psychrerythraea (strain 34H / ATCC BAA-681) (Vibrio psychroerythus)).